The following is a 92-amino-acid chain: Integration host factor subunit beta (92 aa).

Belongs to the bacterial histone-like protein family. Heterodimer of an alpha and a beta chain.

Its function is as follows. This protein is one of the two subunits of integration host factor, a specific DNA-binding protein that functions in genetic recombination as well as in transcriptional and translational control. In Azotobacter vinelandii (strain DJ / ATCC BAA-1303), this protein is Integration host factor subunit beta.